A 125-amino-acid polypeptide reads, in one-letter code: Hydrogenase maturation factor HypA (125 aa).

H2 contacts Ni(2+). The Zn(2+) site is built by C73, C76, C96, and C99.

Belongs to the HypA/HybF family.

Its function is as follows. Involved in the maturation of [NiFe] hydrogenases. Required for nickel insertion into the metal center of the hydrogenase. This is Hydrogenase maturation factor HypA from Methanobrevibacter smithii (strain ATCC 35061 / DSM 861 / OCM 144 / PS).